Here is a 149-residue protein sequence, read N- to C-terminus: D-aminoacyl-tRNA deacylase (149 aa).

Residues 137–138 (GP) carry the Gly-cisPro motif, important for rejection of L-amino acids motif.

Belongs to the DTD family. Homodimer.

The protein localises to the cytoplasm. The catalysed reaction is glycyl-tRNA(Ala) + H2O = tRNA(Ala) + glycine + H(+). It catalyses the reaction a D-aminoacyl-tRNA + H2O = a tRNA + a D-alpha-amino acid + H(+). Functionally, an aminoacyl-tRNA editing enzyme that deacylates mischarged D-aminoacyl-tRNAs. Also deacylates mischarged glycyl-tRNA(Ala), protecting cells against glycine mischarging by AlaRS. Acts via tRNA-based rather than protein-based catalysis; rejects L-amino acids rather than detecting D-amino acids in the active site. By recycling D-aminoacyl-tRNA to D-amino acids and free tRNA molecules, this enzyme counteracts the toxicity associated with the formation of D-aminoacyl-tRNA entities in vivo and helps enforce protein L-homochirality. The chain is D-aminoacyl-tRNA deacylase from Syntrophus aciditrophicus (strain SB).